Reading from the N-terminus, the 475-residue chain is Ribulose bisphosphate carboxylase large chain (475 aa).

Residues 1–2 (MS) constitute a propeptide that is removed on maturation. Proline 3 bears the N-acetylproline mark. Lysine 14 carries the post-translational modification N6,N6,N6-trimethyllysine. Residues asparagine 123 and threonine 173 each coordinate substrate. Lysine 175 serves as the catalytic Proton acceptor. Residue lysine 177 participates in substrate binding. Residues lysine 201, aspartate 203, and glutamate 204 each coordinate Mg(2+). An N6-carboxylysine modification is found at lysine 201. Histidine 294 acts as the Proton acceptor in catalysis. 3 residues coordinate substrate: arginine 295, histidine 327, and serine 379.

Belongs to the RuBisCO large chain family. Type I subfamily. As to quaternary structure, heterohexadecamer of 8 large chains and 8 small chains; disulfide-linked. The disulfide link is formed within the large subunit homodimers. Mg(2+) serves as cofactor. In terms of processing, the disulfide bond which can form in the large chain dimeric partners within the hexadecamer appears to be associated with oxidative stress and protein turnover.

It localises to the plastid. Its subcellular location is the chloroplast. It carries out the reaction 2 (2R)-3-phosphoglycerate + 2 H(+) = D-ribulose 1,5-bisphosphate + CO2 + H2O. It catalyses the reaction D-ribulose 1,5-bisphosphate + O2 = 2-phosphoglycolate + (2R)-3-phosphoglycerate + 2 H(+). Its function is as follows. RuBisCO catalyzes two reactions: the carboxylation of D-ribulose 1,5-bisphosphate, the primary event in carbon dioxide fixation, as well as the oxidative fragmentation of the pentose substrate in the photorespiration process. Both reactions occur simultaneously and in competition at the same active site. The protein is Ribulose bisphosphate carboxylase large chain of Mesostigma viride (Green alga).